A 156-amino-acid polypeptide reads, in one-letter code: 6,7-dimethyl-8-ribityllumazine synthase (156 aa).

5-amino-6-(D-ribitylamino)uracil is bound by residues F22, 57–59 (AYE), and 81–83 (TVI). 86–87 (GT) serves as a coordination point for (2S)-2-hydroxy-3-oxobutyl phosphate. The active-site Proton donor is the H89. Position 114 (F114) interacts with 5-amino-6-(D-ribitylamino)uracil. Position 128 (R128) interacts with (2S)-2-hydroxy-3-oxobutyl phosphate.

This sequence belongs to the DMRL synthase family. Forms an icosahedral capsid composed of 60 subunits, arranged as a dodecamer of pentamers.

The catalysed reaction is (2S)-2-hydroxy-3-oxobutyl phosphate + 5-amino-6-(D-ribitylamino)uracil = 6,7-dimethyl-8-(1-D-ribityl)lumazine + phosphate + 2 H2O + H(+). It functions in the pathway cofactor biosynthesis; riboflavin biosynthesis; riboflavin from 2-hydroxy-3-oxobutyl phosphate and 5-amino-6-(D-ribitylamino)uracil: step 1/2. Catalyzes the formation of 6,7-dimethyl-8-ribityllumazine by condensation of 5-amino-6-(D-ribitylamino)uracil with 3,4-dihydroxy-2-butanone 4-phosphate. This is the penultimate step in the biosynthesis of riboflavin. This chain is 6,7-dimethyl-8-ribityllumazine synthase, found in Erwinia tasmaniensis (strain DSM 17950 / CFBP 7177 / CIP 109463 / NCPPB 4357 / Et1/99).